A 251-amino-acid polypeptide reads, in one-letter code: Cytochrome P450 monooxygenase ppzG (251 aa).

Cys-250 provides a ligand contact to heme.

It belongs to the cytochrome P450 family. Heme is required as a cofactor.

It functions in the pathway secondary metabolite biosynthesis. Its function is as follows. Cytochrome P450 monooxygenase; part of the gene cluster that mediates the biosynthesis of pyrrolopyrazines, secondary metabolites showing insecticidal activity. The role of ppzG within the pathway has still to be determined. The single multifunctional NRPS ppzA is sufficient to produce peramine via condensation of 1-pyrroline-5-carboxylate and arginine, N-methylation of the alpha-amino group of arginine and reduction of the thioester and the cyclization to form an iminium ion resulting in release from the peptide synthetase. Deprotonation of this intermediate and oxidation of the pyrroline ring would give rise to peramine. In Epichloe species that produce only peramine, the peramine synthetase gene is not localized in a gene cluster, in contrast to Metarhizium species that contain additional pyrrolopyrazine biosynthesis genes. The 2-oxoglutarate-Fe(II) type oxidoreductase ppzC hydroxylates peramine to yield the newly identified compound 8-hydroxyperamine whereas ppzD converts L-proline into trans-4-hydroxy-L-proline, a precursor of peramine biosynthesis. The sequence is that of Cytochrome P450 monooxygenase ppzG from Metarhizium rileyi (strain RCEF 4871) (Nomuraea rileyi).